The following is a 390-amino-acid chain: GTPase Obg (390 aa).

Residues 1–159 (MKFVDEASIL…RELLLELMLL (159 aa)) form the Obg domain. Residues 127–147 (NTRFKSSVNRTPRQKTNGTPG) are disordered. Polar residues predominate over residues 129–145 (RFKSSVNRTPRQKTNGT). Residues 160–333 (ADVGMLGMPN…LCWDVMTFII (174 aa)) form the OBG-type G domain. GTP-binding positions include 166–173 (GMPNAGKS), 191–195 (FTTLV), 213–216 (DIPG), 283–286 (NKID), and 314–316 (SAA). Residues Ser173 and Thr193 each coordinate Mg(2+).

Belongs to the TRAFAC class OBG-HflX-like GTPase superfamily. OBG GTPase family. Monomer. Requires Mg(2+) as cofactor.

It is found in the cytoplasm. Its function is as follows. An essential GTPase which binds GTP, GDP and possibly (p)ppGpp with moderate affinity, with high nucleotide exchange rates and a fairly low GTP hydrolysis rate. Plays a role in control of the cell cycle, stress response, ribosome biogenesis and in those bacteria that undergo differentiation, in morphogenesis control. The sequence is that of GTPase Obg from Escherichia fergusonii (strain ATCC 35469 / DSM 13698 / CCUG 18766 / IAM 14443 / JCM 21226 / LMG 7866 / NBRC 102419 / NCTC 12128 / CDC 0568-73).